Reading from the N-terminus, the 440-residue chain is D-serine dehydratase (440 aa).

N6-(pyridoxal phosphate)lysine is present on Lys-116.

It belongs to the serine/threonine dehydratase family. DsdA subfamily. Monomer. Pyridoxal 5'-phosphate is required as a cofactor.

The catalysed reaction is D-serine = pyruvate + NH4(+). The protein is D-serine dehydratase of Salmonella agona (strain SL483).